We begin with the raw amino-acid sequence, 156 residues long: Lipoprotein signal peptidase (156 aa).

Transmembrane regions (helical) follow at residues 5–25 (FKFIFYFWGAFVLVFALDQWV), 64–84 (YLHLALIVVLFIYLFWQKTLL), and 89–109 (IAFGMMLGAGVSNLLDRFIHG). Catalysis depends on residues D113 and D130. Residues 122-142 (NFAIFNVADVMINISVALILI) form a helical membrane-spanning segment.

This sequence belongs to the peptidase A8 family.

It is found in the cell inner membrane. The catalysed reaction is Release of signal peptides from bacterial membrane prolipoproteins. Hydrolyzes -Xaa-Yaa-Zaa-|-(S,diacylglyceryl)Cys-, in which Xaa is hydrophobic (preferably Leu), and Yaa (Ala or Ser) and Zaa (Gly or Ala) have small, neutral side chains.. The protein operates within protein modification; lipoprotein biosynthesis (signal peptide cleavage). This protein specifically catalyzes the removal of signal peptides from prolipoproteins. This chain is Lipoprotein signal peptidase, found in Campylobacter jejuni subsp. jejuni serotype O:23/36 (strain 81-176).